We begin with the raw amino-acid sequence, 185 residues long: Putative gustatory receptor clone PTE01 (185 aa).

The helical transmembrane segment at 1–11 threads the bilayer; the sequence is MYLFLSNLSLA. Residues 12–42 lie on the Extracellular side of the membrane; it reads DISFTSTTLPKMIVDIQTNNRAISYSGCLTQ. The helical transmembrane segment at 43–62 threads the bilayer; that stretch reads MSFFMLFGCLDSLLLTAMAY. The Cytoplasmic segment spans residues 63–84; that stretch reads DRFVAICHPLHYQVIMNPRLCG. Residues 85–105 traverse the membrane as a helical segment; that stretch reads LLVFLSILISLLVSQLHNSVV. Over 106-138 the chain is Extracellular; the sequence is LQLTYFKSVDISHFFCDPSLLLNLACSDTFTNN. The helical transmembrane segment at 139 to 160 threads the bilayer; the sequence is IVMYFVGAISGFLPISGIFFSY. The Cytoplasmic segment spans residues 161–182; it reads YKIVSSILRMPSPGGKYKAFST. The chain crosses the membrane as a helical span at residues 183–185; it reads CGS.

It belongs to the G-protein coupled receptor 1 family. As to expression, tongue specific.

Its subcellular location is the cell membrane. Functionally, possible taste receptor. In Rattus norvegicus (Rat), this protein is Putative gustatory receptor clone PTE01.